The following is a 328-amino-acid chain: L-tyrosine isonitrile synthase (328 aa).

This sequence belongs to the isocyanide synthase family. In terms of assembly, monomer in solution.

The enzyme catalyses D-ribulose 5-phosphate + L-tyrosine = (2S)-3-(4-hydroxyphenyl)-2-isocyanopropanoate + hydroxyacetone + formaldehyde + phosphate + H2O + H(+). In terms of biological role, involved in the biosynthesis of paerucumarin, a cyclized isocyano derivative of tyrosine. Responsible for the synthesis of the isonitrile group on tyrosine using the C2 of ribulose 5-phosphate as the source of the carbon atom. The chain is L-tyrosine isonitrile synthase from Pseudomonas aeruginosa (strain ATCC 15692 / DSM 22644 / CIP 104116 / JCM 14847 / LMG 12228 / 1C / PRS 101 / PAO1).